We begin with the raw amino-acid sequence, 89 residues long: Small ribosomal subunit protein uS15 (89 aa).

This sequence belongs to the universal ribosomal protein uS15 family. As to quaternary structure, part of the 30S ribosomal subunit. Forms a bridge to the 50S subunit in the 70S ribosome, contacting the 23S rRNA.

Functionally, one of the primary rRNA binding proteins, it binds directly to 16S rRNA where it helps nucleate assembly of the platform of the 30S subunit by binding and bridging several RNA helices of the 16S rRNA. In terms of biological role, forms an intersubunit bridge (bridge B4) with the 23S rRNA of the 50S subunit in the ribosome. The polypeptide is Small ribosomal subunit protein uS15 (Vibrio cholerae serotype O1 (strain ATCC 39541 / Classical Ogawa 395 / O395)).